Consider the following 259-residue polypeptide: Probable metal transport system ATP-binding protein TC_0339 (259 aa).

In terms of domain architecture, ABC transporter spans tryptophan 9–leucine 241. Glycine 41 to serine 48 serves as a coordination point for ATP.

Belongs to the ABC transporter superfamily.

The protein resides in the cell inner membrane. Part of an ATP-driven transport system TC_0338/TC_0339/TC_0341/TC_0342 for a metal. Probably responsible for energy coupling to the transport system. The chain is Probable metal transport system ATP-binding protein TC_0339 from Chlamydia muridarum (strain MoPn / Nigg).